The primary structure comprises 282 residues: 2-dehydro-3-deoxyphosphooctonate aldolase (282 aa).

Belongs to the KdsA family.

Its subcellular location is the cytoplasm. The catalysed reaction is D-arabinose 5-phosphate + phosphoenolpyruvate + H2O = 3-deoxy-alpha-D-manno-2-octulosonate-8-phosphate + phosphate. Its pathway is carbohydrate biosynthesis; 3-deoxy-D-manno-octulosonate biosynthesis; 3-deoxy-D-manno-octulosonate from D-ribulose 5-phosphate: step 2/3. It participates in bacterial outer membrane biogenesis; lipopolysaccharide biosynthesis. This is 2-dehydro-3-deoxyphosphooctonate aldolase from Bradyrhizobium diazoefficiens (strain JCM 10833 / BCRC 13528 / IAM 13628 / NBRC 14792 / USDA 110).